A 563-amino-acid polypeptide reads, in one-letter code: MDTKTLIASEIAKVVPELEQDAIFNLLETPKNSDMGDLAFPAFSLAKVLRKAPQMIASELAEQIDESQFEKVVAVGPYINFFLDKAKISSQVLEQVITAGSDYAQQDEGQGRNVAIDMSSPNIAKPFSIGHLRSTVIGDSLAHIFAKMGYKPVKINHLGDWGKQFGMLIVAYKKWGDEAAVQAHPIDELLKLYVRINAEAETDPTVDEEAREWFRKLEDGDKEATELWQWFRDESLLEFNRLYDQLHVTFDSYNGEAFYNDKMDEVLELLEAKNLLVESKGAQVVNLEKYGIEHPALIKKSDGATLYITRDLAAALYRKRTYDFAKSVYVVGNEQAAHFKQLKAVLKEMGYDWSDDMTHVAFGLVTKGGAKLSTRKGNVILLEPTVAEAINRAASQIEAKNPNLADKEAVAHAVGVGAIKFYDLKTDRMNGYDFDLEAMVSFEGETGPYVQYAHARIQSILRKADFTPSATTTYSLADAESWEIIKLIQDFPRIIKRTSDNFEPSIMAKFAINLAQSFNKYYAHTRILDDNSERDNRLALCYATATVLKEALRLLGVDAPNEM.

Residues 121–131 (PNIAKPFSIGH) carry the 'HIGH' region motif.

The protein belongs to the class-I aminoacyl-tRNA synthetase family. As to quaternary structure, monomer.

Its subcellular location is the cytoplasm. It carries out the reaction tRNA(Arg) + L-arginine + ATP = L-arginyl-tRNA(Arg) + AMP + diphosphate. In Streptococcus pyogenes serotype M3 (strain ATCC BAA-595 / MGAS315), this protein is Arginine--tRNA ligase.